A 163-amino-acid polypeptide reads, in one-letter code: Probable chemoreceptor glutamine deamidase CheD (163 aa).

It belongs to the CheD family.

The enzyme catalyses L-glutaminyl-[protein] + H2O = L-glutamyl-[protein] + NH4(+). Functionally, probably deamidates glutamine residues to glutamate on methyl-accepting chemotaxis receptors (MCPs), playing an important role in chemotaxis. The protein is Probable chemoreceptor glutamine deamidase CheD of Pyrococcus abyssi (strain GE5 / Orsay).